We begin with the raw amino-acid sequence, 490 residues long: Probable cytosol aminopeptidase (490 aa).

2 residues coordinate Mn(2+): lysine 255 and aspartate 260. Residue lysine 267 is part of the active site. Mn(2+)-binding residues include aspartate 278, aspartate 337, and glutamate 339. Residue arginine 341 is part of the active site.

It belongs to the peptidase M17 family. Mn(2+) serves as cofactor.

The protein localises to the cytoplasm. It catalyses the reaction Release of an N-terminal amino acid, Xaa-|-Yaa-, in which Xaa is preferably Leu, but may be other amino acids including Pro although not Arg or Lys, and Yaa may be Pro. Amino acid amides and methyl esters are also readily hydrolyzed, but rates on arylamides are exceedingly low.. It carries out the reaction Release of an N-terminal amino acid, preferentially leucine, but not glutamic or aspartic acids.. Functionally, presumably involved in the processing and regular turnover of intracellular proteins. Catalyzes the removal of unsubstituted N-terminal amino acids from various peptides. This Gluconobacter oxydans (strain 621H) (Gluconobacter suboxydans) protein is Probable cytosol aminopeptidase.